An 82-amino-acid chain; its full sequence is Exodeoxyribonuclease 7 small subunit (82 aa).

Belongs to the XseB family. Heterooligomer composed of large and small subunits.

The protein localises to the cytoplasm. It catalyses the reaction Exonucleolytic cleavage in either 5'- to 3'- or 3'- to 5'-direction to yield nucleoside 5'-phosphates.. Bidirectionally degrades single-stranded DNA into large acid-insoluble oligonucleotides, which are then degraded further into small acid-soluble oligonucleotides. The polypeptide is Exodeoxyribonuclease 7 small subunit (Sodalis glossinidius (strain morsitans)).